A 450-amino-acid polypeptide reads, in one-letter code: 23S rRNA (uracil(1939)-C(5))-methyltransferase RlmD (450 aa).

Residues Cys81, Cys87, Cys90, and Cys173 each contribute to the [4Fe-4S] cluster site. S-adenosyl-L-methionine is bound by residues Gln276, Phe305, Asn310, Glu326, Asp353, and Asp372. The active-site Nucleophile is the Cys402.

It belongs to the class I-like SAM-binding methyltransferase superfamily. RNA M5U methyltransferase family. RlmD subfamily.

It carries out the reaction uridine(1939) in 23S rRNA + S-adenosyl-L-methionine = 5-methyluridine(1939) in 23S rRNA + S-adenosyl-L-homocysteine + H(+). In terms of biological role, catalyzes the formation of 5-methyl-uridine at position 1939 (m5U1939) in 23S rRNA. In Idiomarina loihiensis (strain ATCC BAA-735 / DSM 15497 / L2-TR), this protein is 23S rRNA (uracil(1939)-C(5))-methyltransferase RlmD.